We begin with the raw amino-acid sequence, 244 residues long: Trypsin (244 aa).

The signal sequence occupies residues 1 to 15 (MKFLVILVLLGAAVA). The propeptide at 16–21 (FEDDDK) is activation peptide. One can recognise a Peptidase S1 domain in the interval 22–242 (IVGGFTCAKN…FVTWIQSTIS (221 aa)). Cystine bridges form between cysteine 28/cysteine 158, cysteine 46/cysteine 62, cysteine 130/cysteine 231, cysteine 137/cysteine 204, cysteine 169/cysteine 183, and cysteine 194/cysteine 218. Catalysis depends on histidine 61, which acts as the Charge relay system. Ca(2+) contacts are provided by glutamate 73, asparagine 75, and glutamate 83. Residue aspartate 105 is the Charge relay system of the active site. Serine 198 serves as the catalytic Charge relay system.

This sequence belongs to the peptidase S1 family. Ca(2+) serves as cofactor.

Its subcellular location is the secreted. It is found in the extracellular space. The catalysed reaction is Preferential cleavage: Arg-|-Xaa, Lys-|-Xaa.. The polypeptide is Trypsin (Xenopus laevis (African clawed frog)).